The sequence spans 268 residues: Cytochrome b-c1 complex subunit Rieske-3, mitochondrial (268 aa).

A mitochondrion-targeting transit peptide spans 1-56; that stretch reads MLRIAGRKLSSSAATRSSSAFFTRNPFTFTDDSSSPARSPSPASLASQFLDQFRGF. Topologically, residues 57–105 are mitochondrial matrix; it reads SSNSVSPAHQTGLVSDLPATVAAIKNPSSKIVYDDSNHERYPPGDPSKR. The helical transmembrane segment at 106–128 threads the bilayer; it reads AFAYFVLTGGRFVYASLVRLLIL. The Mitochondrial intermembrane portion of the chain corresponds to 129–268; sequence KFVLSMSASK…FMEENKLLIG (140 aa). The Rieske domain maps to 178 to 266; the sequence is INLANSVDLG…YSFMEENKLL (89 aa). Positions 211, 213, 230, and 233 each coordinate [2Fe-2S] cluster. A disulfide bond links Cys216 and Cys232.

This sequence belongs to the Rieske iron-sulfur protein family. In terms of assembly, component of the ubiquinol-cytochrome c oxidoreductase (cytochrome b-c1 complex, complex III, CIII), a multisubunit enzyme composed of 3 respiratory subunits cytochrome b, cytochrome c1 and Rieske protein, 2 core protein subunits, and several low-molecular weight protein subunits. The complex exists as an obligatory dimer and forms supercomplexes (SCs) in the inner mitochondrial membrane with cytochrome c oxidase (complex IV, CIV). It depends on [2Fe-2S] cluster as a cofactor. In terms of tissue distribution, high levels are seen in the flowers while a low level expression is seen in the roots, leaves and stems.

It is found in the mitochondrion inner membrane. It catalyses the reaction a quinol + 2 Fe(III)-[cytochrome c](out) = a quinone + 2 Fe(II)-[cytochrome c](out) + 2 H(+)(out). Its function is as follows. Component of the ubiquinol-cytochrome c oxidoreductase, a multisubunit transmembrane complex that is part of the mitochondrial electron transport chain which drives oxidative phosphorylation. The respiratory chain contains 3 multisubunit complexes succinate dehydrogenase (complex II, CII), ubiquinol-cytochrome c oxidoreductase (cytochrome b-c1 complex, complex III, CIII) and cytochrome c oxidase (complex IV, CIV), that cooperate to transfer electrons derived from NADH and succinate to molecular oxygen, creating an electrochemical gradient over the inner membrane that drives transmembrane transport and the ATP synthase. The cytochrome b-c1 complex catalyzes electron transfer from ubiquinol to cytochrome c, linking this redox reaction to translocation of protons across the mitochondrial inner membrane, with protons being carried across the membrane as hydrogens on the quinol. In the process called Q cycle, 2 protons are consumed from the matrix, 4 protons are released into the intermembrane space and 2 electrons are passed to cytochrome c. The Rieske protein is a catalytic core subunit containing a [2Fe-2S] iron-sulfur cluster. It cycles between 2 conformational states during catalysis to transfer electrons from the quinol bound in the Q(0) site in cytochrome b to cytochrome c1. This is Cytochrome b-c1 complex subunit Rieske-3, mitochondrial from Nicotiana tabacum (Common tobacco).